We begin with the raw amino-acid sequence, 160 residues long: UPF0262 protein Mmar10_1128 (160 aa).

It belongs to the UPF0262 family.

In Maricaulis maris (strain MCS10) (Caulobacter maris), this protein is UPF0262 protein Mmar10_1128.